Reading from the N-terminus, the 506-residue chain is Maturase K (506 aa).

The protein belongs to the intron maturase 2 family. MatK subfamily.

It localises to the plastid. The protein resides in the chloroplast. Usually encoded in the trnK tRNA gene intron. Probably assists in splicing its own and other chloroplast group II introns. The polypeptide is Maturase K (Pisum sativum (Garden pea)).